Consider the following 715-residue polypeptide: Probable phospholipase YOR022C, mitochondrial (715 aa).

Residues 1 to 22 (MLRFTHRGLPSSTRFRNIFVRL) constitute a mitochondrion transit peptide. Disordered regions lie at residues 161 to 180 (YPVD…NKDE), 242 to 268 (TSTS…SRSI), and 311 to 340 (YNNA…RQIR). Over residues 242–251 (TSTSFKAAKT) the composition is skewed to low complexity. The span at 311 to 324 (YNNADNSQGANASS) shows a compositional bias: polar residues. Ser-501 is an active-site residue. One can recognise a DDHD domain in the interval 519 to 700 (LEFQVDNLFF…AAFILKEILS (182 aa)).

This sequence belongs to the PA-PLA1 family.

The protein resides in the mitochondrion. Functionally, probable phospholipase that hydrolyzes phosphatidic acid. This chain is Probable phospholipase YOR022C, mitochondrial, found in Saccharomyces cerevisiae (strain ATCC 204508 / S288c) (Baker's yeast).